Here is a 245-residue protein sequence, read N- to C-terminus: MAVRASFENNCEVGCFAKLTNTYCLVAIGGSENFYSVFEGELSDTIPVVHASIAGCRIIGRMCVGNRHGLLVPNNTTDQELQHIRNSLPDSVQIRRVEERLSALGNVTTCNDYVALVHPDLDRETEEILADVLKVEVFRQTVADQVLVGSYCVFSNQGGLVHPKTSIEDQDELSSLLQVPLVAGTVNRGSEVIAAGMVVNDWCAFCGLDTTSTELSVVESVFKLNEAKPSTIATSMRDSLIDSLT.

At tyrosine 113 the chain carries Phosphotyrosine. Threonine 165 carries the phosphothreonine modification. Residue serine 166 is modified to Phosphoserine. 2 positions are modified to phosphoserine; by CK1: serine 174 and serine 175. Phosphoserine; by PKC is present on serine 235. Serine 239 and serine 243 each carry phosphoserine.

This sequence belongs to the eIF-6 family. Monomer. Associates with the 60S ribosomal subunit. Interacts with RACK1. Interacts with DICER1, AGO2, TARBP2, MOV10 and RPL7A; they form a large RNA-induced silencing complex (RISC). In terms of processing, phosphorylation at Ser-174 and Ser-175 by CSNK1D/CK1 promotes nuclear export. Ufmylated by UFL1.

The protein resides in the cytoplasm. It localises to the nucleus. It is found in the nucleolus. Binds to the 60S ribosomal subunit and prevents its association with the 40S ribosomal subunit to form the 80S initiation complex in the cytoplasm. Behaves as a stimulatory translation initiation factor downstream insulin/growth factors. Is also involved in ribosome biogenesis. Associates with pre-60S subunits in the nucleus and is involved in its nuclear export. Cytoplasmic release of TIF6 from 60S subunits and nuclear relocalization is promoted by a RACK1 (RACK1)-dependent protein kinase C activity. In tissues responsive to insulin, controls fatty acid synthesis and glycolysis by exerting translational control of adipogenic transcription factors such as CEBPB, CEBPD and ATF4 that have G/C rich or uORF in their 5'UTR. Required for ROS-dependent megakaryocyte maturation and platelets formation, controls the expression of mitochondrial respiratory chain genes involved in reactive oxygen species (ROS) synthesis. Involved in miRNA-mediated gene silencing by the RNA-induced silencing complex (RISC). Required for both miRNA-mediated translational repression and miRNA-mediated cleavage of complementary mRNAs by RISC. Modulates cell cycle progression and global translation of pre-B cells, its activation seems to be rate-limiting in tumorigenesis and tumor growth. This chain is Eukaryotic translation initiation factor 6 (Eif6), found in Rattus norvegicus (Rat).